Consider the following 1133-residue polypeptide: DNA-directed RNA polymerase subunit beta (1133 aa).

Residues A1085–F1133 form a disordered region. Polar residues predominate over residues R1090–D1105. Residues E1123–F1133 show a composition bias toward acidic residues.

Belongs to the RNA polymerase beta chain family. In cyanobacteria the RNAP catalytic core is composed of 2 alpha, 1 beta, 1 beta', 1 gamma and 1 omega subunit. When a sigma factor is associated with the core the holoenzyme is formed, which can initiate transcription.

It catalyses the reaction RNA(n) + a ribonucleoside 5'-triphosphate = RNA(n+1) + diphosphate. In terms of biological role, DNA-dependent RNA polymerase catalyzes the transcription of DNA into RNA using the four ribonucleoside triphosphates as substrates. This Synechococcus sp. (strain JA-3-3Ab) (Cyanobacteria bacterium Yellowstone A-Prime) protein is DNA-directed RNA polymerase subunit beta.